Reading from the N-terminus, the 312-residue chain is tRNA-dihydrouridine(16) synthase (312 aa).

Residues 7–9 (PME) and Gln-68 each bind FMN. Cys-98 functions as the Proton donor in the catalytic mechanism. Residues Lys-139, 200 to 202 (NGE), and 224 to 225 (GR) each bind FMN.

Belongs to the Dus family. DusC subfamily. Requires FMN as cofactor.

The enzyme catalyses 5,6-dihydrouridine(16) in tRNA + NADP(+) = uridine(16) in tRNA + NADPH + H(+). The catalysed reaction is 5,6-dihydrouridine(16) in tRNA + NAD(+) = uridine(16) in tRNA + NADH + H(+). Functionally, catalyzes the synthesis of 5,6-dihydrouridine (D), a modified base found in the D-loop of most tRNAs, via the reduction of the C5-C6 double bond in target uridines. Specifically modifies U16 in tRNAs. The chain is tRNA-dihydrouridine(16) synthase from Salmonella typhimurium (strain LT2 / SGSC1412 / ATCC 700720).